The primary structure comprises 234 residues: NAD-reducing hydrogenase HoxS subunit gamma (234 aa).

The 76-residue stretch at S2–E77 folds into the 2Fe-2S ferredoxin-type domain. [2Fe-2S] cluster-binding residues include C35, C46, C49, and C61. One can recognise a 4Fe-4S His(Cys)3-ligated-type domain in the interval E77–D116. [4Fe-4S] cluster is bound by residues H95, C97, C100, C106, C145, C148, C151, and C198.

The protein belongs to the complex I 75 kDa subunit family. As to quaternary structure, tetramer of an alpha and a gamma subunits (flavin-containing dimer), and a delta and a nickel-containing beta subunits (hydrogenase dimer). Requires [2Fe-2S] cluster as cofactor. It depends on [4Fe-4S] cluster as a cofactor.

The protein resides in the cytoplasm. It catalyses the reaction H2 + NAD(+) = NADH + H(+). In terms of biological role, subunits alpha and gamma of HoxS constitute an NADH--oxidoreductase. The protein is NAD-reducing hydrogenase HoxS subunit gamma (hoxU) of Cupriavidus necator (strain ATCC 17699 / DSM 428 / KCTC 22496 / NCIMB 10442 / H16 / Stanier 337) (Ralstonia eutropha).